Consider the following 734-residue polypeptide: Origin of replication complex subunit 3 (734 aa).

Disordered stretches follow at residues 1 to 25 (MAPSGTVADPPQCSTTDSFNSSDTA) and 532 to 554 (GQRQGLPNSPKKHASRSNSKLEK). Over residues 12 to 24 (QCSTTDSFNSSDT) the composition is skewed to polar residues.

It belongs to the ORC3 family. As to quaternary structure, component of the origin recognition complex (ORC) composed of at least ORC1 (ORC1A or ORC1B), ORC2, ORC3, ORC4, ORC5 and ORC6. ORC is regulated in a cell-cycle and development dependent manner. It is sequentially assembled at the exit from anaphase of mitosis and disassembled as cells enter S phase. Interacts directly with ORC1A, ORC2, ORC4, ORC5 and ORC6. In terms of tissue distribution, follow a cell-cycle regulation with a peak at the G1/S-phase. Mostly expressed in siliques and flowers, and, to a lower exent, in flower buds, leaves, roots and stems.

The protein resides in the nucleus. Functionally, component of the origin recognition complex (ORC) that binds origins of replication. DNA-binding is ATP-dependent. The specific DNA sequences that define origins of replication have not been identified yet. The sequence is that of Origin of replication complex subunit 3 from Arabidopsis thaliana (Mouse-ear cress).